A 206-amino-acid chain; its full sequence is MARYLGPKLKLSRREGTDLFLKSGVRAIDTKCKIDNAPGVHGARRGRLSEYGVQLREKQKVRRMYGVLEKQFRNYYAEAARLKGNTGENLLQLLEGRLDNVVYRMGFGATRAEARQLVSHKAILVNGKVVNVPSFKVAANDVVSIREKAKQQTRIKAALEVAEQREKPTWIEVDAGKMEGTFKRMPERSDLSADINEQLIVELYSK.

The 63-residue stretch at 96 to 158 (GRLDNVVYRM…AKQQTRIKAA (63 aa)) folds into the S4 RNA-binding domain.

It belongs to the universal ribosomal protein uS4 family. Part of the 30S ribosomal subunit. Contacts protein S5. The interaction surface between S4 and S5 is involved in control of translational fidelity.

In terms of biological role, one of the primary rRNA binding proteins, it binds directly to 16S rRNA where it nucleates assembly of the body of the 30S subunit. With S5 and S12 plays an important role in translational accuracy. The sequence is that of Small ribosomal subunit protein uS4 from Vibrio vulnificus (strain CMCP6).